Reading from the N-terminus, the 265-residue chain is Lipopolysaccharide core heptose(I) kinase WaaP (265 aa).

Aspartate 162 is a catalytic residue.

The protein belongs to the protein kinase superfamily. KdkA/RfaP family. Mg(2+) serves as cofactor.

The enzyme catalyses an L-alpha-D-Hep-(1-&gt;3)-L-alpha-D-Hep-(1-&gt;5)-[alpha-Kdo-(2-&gt;4)]-alpha-Kdo-(2-&gt;6)-lipid A + ATP = an L-alpha-D-Hep-(1-&gt;3)-4-O-phospho-L-alpha-D-Hep-(1-&gt;5)-[alpha-Kdo-(2-&gt;4)]-alpha-Kdo-(2-&gt;6)-lipid A + ADP + H(+). It catalyses the reaction L-alpha-D-Hep-(1-&gt;3)-L-alpha-D-Hep-(1-&gt;5)-[alpha-Kdo-(2-&gt;4)]-alpha-Kdo-(2-&gt;6)-lipid A (E. coli) + ATP = L-alpha-D-Hep-(1-&gt;3)-4-O-phospho-L-alpha-D-Hep-(1-&gt;5)-[alpha-Kdo-(2-&gt;4)]-alpha-Kdo-(2-&gt;6)-lipid A (E. coli) + ADP + H(+). The protein operates within bacterial outer membrane biogenesis; LPS core biosynthesis. Its function is as follows. Kinase involved in the biosynthesis of the core oligosaccharide region of lipopolysaccharide (LPS). Catalyzes the phosphorylation of heptose I (HepI), the first heptose added to the Kdo2-lipid A module. The chain is Lipopolysaccharide core heptose(I) kinase WaaP from Escherichia coli (strain K12).